Reading from the N-terminus, the 177-residue chain is ATP synthase subunit delta (177 aa).

The protein belongs to the ATPase delta chain family. As to quaternary structure, F-type ATPases have 2 components, F(1) - the catalytic core - and F(0) - the membrane proton channel. F(1) has five subunits: alpha(3), beta(3), gamma(1), delta(1), epsilon(1). CF(0) has four main subunits: a(1), b(1), b'(1) and c(10-14). The alpha and beta chains form an alternating ring which encloses part of the gamma chain. F(1) is attached to F(0) by a central stalk formed by the gamma and epsilon chains, while a peripheral stalk is formed by the delta, b and b' chains.

Its subcellular location is the cell inner membrane. Its function is as follows. F(1)F(0) ATP synthase produces ATP from ADP in the presence of a proton or sodium gradient. F-type ATPases consist of two structural domains, F(1) containing the extramembraneous catalytic core and F(0) containing the membrane proton channel, linked together by a central stalk and a peripheral stalk. During catalysis, ATP synthesis in the catalytic domain of F(1) is coupled via a rotary mechanism of the central stalk subunits to proton translocation. Functionally, this protein is part of the stalk that links CF(0) to CF(1). It either transmits conformational changes from CF(0) to CF(1) or is implicated in proton conduction. This chain is ATP synthase subunit delta, found in Methylibium petroleiphilum (strain ATCC BAA-1232 / LMG 22953 / PM1).